Consider the following 212-residue polypeptide: Redox-sensing transcriptional repressor Rex (212 aa).

A DNA-binding region (H-T-H motif) is located at residues 16 to 55; the sequence is IYYRYLNILLDADKTRVSSTELSEAVKVDSATIRRDFSYF. NAD(+) is bound at residue 90-95; that stretch reads GVGNLG.

Belongs to the transcriptional regulatory Rex family. Homodimer.

Its subcellular location is the cytoplasm. Its function is as follows. Modulates transcription in response to changes in cellular NADH/NAD(+) redox state. In Levilactobacillus brevis (strain ATCC 367 / BCRC 12310 / CIP 105137 / JCM 1170 / LMG 11437 / NCIMB 947 / NCTC 947) (Lactobacillus brevis), this protein is Redox-sensing transcriptional repressor Rex.